Consider the following 246-residue polypeptide: MFYSPLDQFELKPLLLITDNLTFSITNYTLYLIIVSLIIIFYSSIIRHNYLGSSRWGVSVIAIYDTILNLVNGQIGRKGGYYFPLIFTIFNFILIANLISMIPYSFAISAQLVAVVSFSLTLWIGNVVLGLYLHGWGFFALFVPSGTPLALVPVLVLIEALSYASRAISLGLRLGANILSGHLLMLILGSLIISLMSSSFLGFVSGIIPILAVVAITILEFGIAIIQAYVFSILLSGYIKDSVELH.

Residues 1–3 constitute a propeptide, removed in mature form; sequence MFY. The next 7 membrane-spanning stretches (helical) occupy residues 21–41, 56–76, 82–102, 113–133, 138–158, 184–204, and 206–226; these read LTFS…IIIF, WGVS…GQIG, YFPL…ISMI, VAVV…GLYL, FFAL…LVLI, LMLI…LGFV, and GIIP…IAII.

It belongs to the ATPase A chain family. In terms of assembly, F-type ATPases have 2 components, CF(1) - the catalytic core - and CF(0) - the membrane proton channel. CF(1) has five subunits: alpha(3), beta(3), gamma(1), delta(1), epsilon(1). CF(0) has three main subunits: a, b and c.

The protein resides in the mitochondrion inner membrane. Functionally, mitochondrial membrane ATP synthase (F(1)F(0) ATP synthase or Complex V) produces ATP from ADP in the presence of a proton gradient across the membrane which is generated by electron transport complexes of the respiratory chain. F-type ATPases consist of two structural domains, F(1) - containing the extramembraneous catalytic core and F(0) - containing the membrane proton channel, linked together by a central stalk and a peripheral stalk. During catalysis, ATP synthesis in the catalytic domain of F(1) is coupled via a rotary mechanism of the central stalk subunits to proton translocation. Key component of the proton channel; it may play a direct role in the translocation of protons across the membrane. The chain is ATP synthase subunit a (ATP6) from Candida parapsilosis (Yeast).